The chain runs to 137 residues: Large ribosomal subunit protein uL16 (137 aa).

Belongs to the universal ribosomal protein uL16 family. As to quaternary structure, part of the 50S ribosomal subunit.

Binds 23S rRNA and is also seen to make contacts with the A and possibly P site tRNAs. The polypeptide is Large ribosomal subunit protein uL16 (Bartonella henselae (strain ATCC 49882 / DSM 28221 / CCUG 30454 / Houston 1) (Rochalimaea henselae)).